Here is a 251-residue protein sequence, read N- to C-terminus: Methionine aminopeptidase (251 aa).

His79 is a substrate binding site. Positions 96, 107, and 170 each coordinate a divalent metal cation. A substrate-binding site is contributed by His177. Positions 204 and 235 each coordinate a divalent metal cation.

Belongs to the peptidase M24A family. Methionine aminopeptidase type 1 subfamily. As to quaternary structure, monomer. It depends on Co(2+) as a cofactor. Zn(2+) is required as a cofactor. Requires Mn(2+) as cofactor. Fe(2+) serves as cofactor.

The enzyme catalyses Release of N-terminal amino acids, preferentially methionine, from peptides and arylamides.. In terms of biological role, removes the N-terminal methionine from nascent proteins. The N-terminal methionine is often cleaved when the second residue in the primary sequence is small and uncharged (Met-Ala-, Cys, Gly, Pro, Ser, Thr, or Val). Requires deformylation of the N(alpha)-formylated initiator methionine before it can be hydrolyzed. This Borreliella burgdorferi (strain ATCC 35210 / DSM 4680 / CIP 102532 / B31) (Borrelia burgdorferi) protein is Methionine aminopeptidase.